A 128-amino-acid polypeptide reads, in one-letter code: Small ribosomal subunit protein uS9 (128 aa).

The interval 107-128 (RAVERKKPGRPKARKRFQFSKR) is disordered. Residues 113 to 128 (KPGRPKARKRFQFSKR) show a composition bias toward basic residues.

The protein belongs to the universal ribosomal protein uS9 family.

The protein is Small ribosomal subunit protein uS9 of Parabacteroides distasonis (strain ATCC 8503 / DSM 20701 / CIP 104284 / JCM 5825 / NCTC 11152).